We begin with the raw amino-acid sequence, 613 residues long: MCLLSMRFTVAILLVLLSHCGGSHATSCTPGQPFPVPSYPESSLQETFEHIFETASGYFENESFQATNVAIEVTSSRETLWSFYHAAKNQSSQDGSTVIGKDTVFRVARVSKLLTAIAVLQLHDQGHVSSLYDPINDYIPDLEPSSVQWDRVTIWDLLNNVAGILDMCSYTLFDKRLNTNSDFTIDGYADIYMDFSARQKADLNLPPVSDAILEVMPACQVDKSIPCDSAGLLSWLRSSKAVFNPHQVNSNSNVGFSLLGILIERISGVKYEQFIHQTIIEPLQLNSTSFRPPHKDSGAVLQNDHTWSWDVGVNNPSVGLYSTPCDISTLLRWTLNKSPSSILNWFAPGFYAVGSHSLIGMPWNIFRTTTPLSIPNRPTTFNTVVGTLGPYTSVVVVMPEYDLAVSLMMNGALGHPHDILTNVTFPLIRAADKIALESVQDNYAGTYKAEPGQKINSSITLSVSSDHGLRISELISNGSSILPVMERLASSKSGGGANWIFQAVPTFLDSKHQGRRGDGVIVDEEWRWTYVLDKPPGEGWNDWCLSSFDPVTYAGEPLTKMVFHKDAKSGRVLSVALSGYNITLTKAVQEADSFAQGDALDLLAHAGQEVLAE.

Positions 1–25 (MCLLSMRFTVAILLVLLSHCGGSHA) are cleaved as a signal peptide. Asn-61, Asn-89, Asn-286, Asn-422, Asn-456, Asn-477, and Asn-581 each carry an N-linked (GlcNAc...) asparagine glycan.

This sequence belongs to the beta-lactamase family.

Its pathway is secondary metabolite biosynthesis. Probable hydrolase; part of the gene cluster that mediates the biosynthesis of squalestatin S1 (SQS1, also known as zaragozic acid A), a heavily oxidized fungal polyketide that offers potent cholesterol lowering activity by targeting squalene synthase (SS). SQS1 is composed of a 2,8-dioxobicyclic[3.2.1]octane-3,4,5-tricarboxyclic acid core that is connected to two lipophilic polyketide arms. These initial steps feature the priming of an unusual benzoic acid starter unit onto the highly reducing polyketide synthase clz14, followed by oxaloacetate extension and product release to generate a tricarboxylic acid containing product. The phenylalanine ammonia lyase (PAL) clz10 and the acyl-CoA ligase clz12 are involved in transforming phenylalanine into benzoyl-CoA. The citrate synthase-like protein clz17 is involved in connecting the C-alpha-carbons of the hexaketide chain and oxaloacetate to afford the tricarboxylic acid unit. The potential hydrolytic enzymes, clz11 and clz13, are in close proximity to pks2 and may participate in product release. On the other side, the tetraketide arm is synthesized by a the squalestatin tetraketide synthase clz2 and enzymatically esterified to the core in the last biosynthetic step, by the acetyltransferase clz6. The biosynthesis of the tetraketide must involve 3 rounds of chain extension. After the first and second rounds methyl-transfer occurs, and in all rounds of extension the ketoreductase and dehydratase are active. The enoyl reductase and C-MeT of clz2 are not active in the final round of extension. The acetyltransferase clz6 appears to have a broad substrate selectivity for its acyl CoA substrate, allowing the in vitro synthesis of novel squalestatins. The biosynthesis of SQS1 requires several oxidative steps likely performed by oxidoreductases clz3, clz15 and clz16. Finally, in support of the identification of the cluster as being responsible for SQS1 production, the cluster contains a gene encoding a putative squalene synthase (SS) clz20, suggesting a likely mechanism for self-resistance. This Cochliobolus lunatus (Filamentous fungus) protein is Probable hydrolase clz13.